Consider the following 86-residue polypeptide: Sodium channel neurotoxin MeuNaTxalpha-4 (86 aa).

The signal sequence occupies residues 1–19; sequence MNYLILISFALLVITGVES. One can recognise an LCN-type CS-alpha/beta domain in the interval 21–85; that stretch reads RDAYIAKPHN…VPIRIPGKCH (65 aa). Disulfide bonds link Cys-31/Cys-84, Cys-35/Cys-57, Cys-43/Cys-67, and Cys-47/Cys-69. A propeptide (removed by a carboxypeptidase) is located at residue Arg-86.

This sequence belongs to the long (4 C-C) scorpion toxin superfamily. Sodium channel inhibitor family. Alpha subfamily. As to expression, expressed by the venom gland.

The protein localises to the secreted. Functionally, alpha toxins bind voltage-independently at site-3 of sodium channels (Nav) and inhibit the inactivation of the activated channels, thereby blocking neuronal transmission. This toxin inhibits inactivation of drosophila DmNav1 (EC(50)=130 nM). The chain is Sodium channel neurotoxin MeuNaTxalpha-4 from Mesobuthus eupeus (Lesser Asian scorpion).